The sequence spans 348 residues: Cyclic AMP-dependent transcription factor ATF-4 (348 aa).

K53 participates in a covalent cross-link: Glycyl lysine isopeptide (Lys-Gly) (interchain with G-Cter in SUMO2). Disordered regions lie at residues 151-174 (QGAPFTFFQPLPPSPGTLSSTPDH) and 187-265 (PEGD…GEKM). S211, S215, S220, S227, and S231 each carry phosphoserine. The short motif at 211 to 220 (SDNDSGICMS) is the BetaTrCP degron motif element. Residues 221–241 (PDSSLGSPQDSPSTSRGSPNK) show a composition bias toward polar residues. At P232 the chain carries 4-hydroxyproline. 2 positions are modified to phosphoserine: S242 and S245. Residues 242 to 253 (SLLSPGALSGSS) are compositionally biased toward low complexity. Glycyl lysine isopeptide (Lys-Gly) (interchain with G-Cter in SUMO2) cross-links involve residues K256, K264, and K269. Residues 275–338 (LDKKLKKMEQ…QYLKDQIEEV (64 aa)) form the bZIP domain. The segment at 277–297 (KKLKKMEQNKTAATRYRQKKR) is basic motif. The segment at 302-338 (ALTGECKELEKKNEALKEKADSLAKEIQYLKDQIEEV) is interaction with GABBR1. The segment at 303–331 (LTGECKELEKKNEALKEKADSLAKEIQYL) is leucine-zipper. K308 is subject to N6-acetyllysine.

This sequence belongs to the bZIP family. As to quaternary structure, binds DNA as a homodimer and as a heterodimer. Heterodimer; heterodimerizes with CEBPB. Heterodimer; heterodimerizes with DDIT3/CHOP. Interacts with CEP290 (via an N-terminal region). Interacts with NEK6, DAPK2 (isoform 2) and ZIPK/DAPK3. Interacts (via its leucine zipper domain) with GABBR1 and GABBR2 (via their C-termini). Forms a heterodimer with TXLNG in osteoblasts. Interacts (via its DNA binding domain) with FOXO1 (C-terminal half); the interaction occurs in osteoblasts and regulates glucose homeostasis through suppression of beta-cell proliferation and a decrease in insulin production. Interacts with SATB2; the interaction results in enhanced DNA binding and transactivation by these transcription factors. Interacts with ABRAXAS2. Interacts with TRIB3, inhibiting the transactivation activity of ATF4. Interacts with DISC1; which inhibits ATF4 transcription factor activity by disrupting ATF4 dimerization and DNA-binding. Interacts with EP300/p300; EP300/p300 stabilizes ATF4 and increases its transcriptional activity independently of its catalytic activity by preventing its ubiquitination. In terms of processing, ubiquitinated by SCF(BTRC) in response to mTORC1 signal, followed by proteasomal degradation and leading to down-regulate expression of SIRT4. Interaction with EP300/p300 inhibits ubiquitination by SCF(BTRC). Phosphorylation at Ser-242 by RPS6KA3/RSK2 in osteoblasts enhances transactivation activity and promotes osteoblast differentiation. Phosphorylated on the betaTrCP degron motif at Ser-215, followed by phosphorylation at Ser-220, Ser-227, Ser-231 and Ser-245, promoting interaction with BTRC and ubiquitination. Phosphorylation is promoted by mTORC1. Phosphorylation at Ser-211 by CK2 decreases its stability. Phosphorylated by NEK6. Post-translationally, hydroxylated by PHD3, leading to decreased protein stability.

It is found in the nucleus. It localises to the nucleus speckle. The protein resides in the cytoplasm. The protein localises to the cell membrane. Its subcellular location is the cytoskeleton. It is found in the microtubule organizing center. It localises to the centrosome. In terms of biological role, transcription factor that binds the cAMP response element (CRE) (consensus: 5'-GTGACGT[AC][AG]-3') and displays two biological functions, as regulator of metabolic and redox processes under normal cellular conditions, and as master transcription factor during integrated stress response (ISR). Binds to asymmetric CRE's as a heterodimer and to palindromic CRE's as a homodimer. Core effector of the ISR, which is required for adaptation to various stress such as endoplasmic reticulum (ER) stress, amino acid starvation, mitochondrial stress or oxidative stress. During ISR, ATF4 translation is induced via an alternative ribosome translation re-initiation mechanism in response to EIF2S1/eIF-2-alpha phosphorylation, and stress-induced ATF4 acts as a master transcription factor of stress-responsive genes in order to promote cell recovery. Promotes the transcription of genes linked to amino acid sufficiency and resistance to oxidative stress to protect cells against metabolic consequences of ER oxidation. Activates the transcription of NLRP1, possibly in concert with other factors in response to ER stress. Activates the transcription of asparagine synthetase (ASNS) in response to amino acid deprivation or ER stress. However, when associated with DDIT3/CHOP, the transcriptional activation of the ASNS gene is inhibited in response to amino acid deprivation. Together with DDIT3/CHOP, mediates programmed cell death by promoting the expression of genes involved in cellular amino acid metabolic processes, mRNA translation and the terminal unfolded protein response (terminal UPR), a cellular response that elicits programmed cell death when ER stress is prolonged and unresolved. Activates the expression of COX7A2L/SCAF1 downstream of the EIF2AK3/PERK-mediated unfolded protein response, thereby promoting formation of respiratory chain supercomplexes and increasing mitochondrial oxidative phosphorylation. Together with DDIT3/CHOP, activates the transcription of the IRS-regulator TRIB3 and promotes ER stress-induced neuronal cell death by regulating the expression of BBC3/PUMA in response to ER stress. May cooperate with the UPR transcriptional regulator QRICH1 to regulate ER protein homeostasis which is critical for cell viability in response to ER stress. In the absence of stress, ATF4 translation is at low levels and it is required for normal metabolic processes such as embryonic lens formation, fetal liver hematopoiesis, bone development and synaptic plasticity. Acts as a regulator of osteoblast differentiation in response to phosphorylation by RPS6KA3/RSK2: phosphorylation in osteoblasts enhances transactivation activity and promotes expression of osteoblast-specific genes and post-transcriptionally regulates the synthesis of Type I collagen, the main constituent of the bone matrix. Cooperates with FOXO1 in osteoblasts to regulate glucose homeostasis through suppression of beta-cell production and decrease in insulin production. Activates transcription of SIRT4. Regulates the circadian expression of the core clock component PER2 and the serotonin transporter SLC6A4. Binds in a circadian time-dependent manner to the cAMP response elements (CRE) in the SLC6A4 and PER2 promoters and periodically activates the transcription of these genes. Mainly acts as a transcriptional activator in cellular stress adaptation, but it can also act as a transcriptional repressor: acts as a regulator of synaptic plasticity by repressing transcription, thereby inhibiting induction and maintenance of long-term memory. Regulates synaptic functions via interaction with DISC1 in neurons, which inhibits ATF4 transcription factor activity by disrupting ATF4 dimerization and DNA-binding. This chain is Cyclic AMP-dependent transcription factor ATF-4, found in Bos taurus (Bovine).